Reading from the N-terminus, the 859-residue chain is DNA mismatch repair protein MutS (859 aa).

Position 617 to 624 (617 to 624) interacts with ATP; that stretch reads GPNMGGKS.

This sequence belongs to the DNA mismatch repair MutS family.

In terms of biological role, this protein is involved in the repair of mismatches in DNA. It is possible that it carries out the mismatch recognition step. This protein has a weak ATPase activity. The sequence is that of DNA mismatch repair protein MutS from Stutzerimonas stutzeri (strain A1501) (Pseudomonas stutzeri).